A 1032-amino-acid chain; its full sequence is Reticulon-3 (1032 aa).

Residues 1-24 (MAEPSAATQSHSISSSSFGAEPSA) are compositionally biased toward low complexity. The interval 1 to 61 (MAEPSAATQS…SSSSSQPVSL (61 aa)) is disordered. An N-acetylalanine modification is found at Ala2. The Cytoplasmic segment spans residues 2–863 (AEPSAATQSH…KKTGFVFGTT (862 aa)). Position 30 is a phosphoserine (Ser30). A compositionally biased stretch (low complexity) spans 32 to 61 (GACPALGTKSCSSSCADSFVSSSSSQPVSL). A phosphoserine mark is found at Ser229, Ser243, Ser246, Ser283, Ser316, and Ser453. Residues 545–568 (CEREEKTSKNFEELVSDSELHQDQ) are compositionally biased toward basic and acidic residues. The segment at 545-617 (CEREEKTSKN…NPKLPSTVSP (73 aa)) is disordered. A compositionally biased stretch (polar residues) spans 605–617 (TTENPKLPSTVSP). Phosphoserine is present on residues Ser649 and Ser650. A compositionally biased stretch (basic and acidic residues) spans 696 to 715 (NESGGSEIKDIGSKYSEQSK). The tract at residues 696-726 (NESGGSEIKDIGSKYSEQSKETNGSEPLGVF) is disordered. At Ser735 the chain carries Phosphoserine. The Reticulon domain maps to 844–1032 (VHDLIFWRDV…LPGIAKKKAE (189 aa)). Positions 864 to 887 (LIMLLSLAAFSVISVVSYLILALL) form an intramembrane region, helical. The Cytoplasmic segment spans residues 888 to 947 (SVTISFRIYKSVIQAVQKSEEGHPFKAYLDVDITLSSEAFHNYMNAAMVHINRALKLIIR). The helical intramembrane region spans 948 to 968 (LFLVEDLVDSLKLAVFMWLMT). Residues 969 to 972 (YVGA) are Cytoplasmic-facing. An intramembrane region (helical) is located at residues 973 to 993 (VFNGITLLILAELLIFSVPIV). The interaction with FADD stretch occupies residues 987–1032 (IFSVPIVYEKYKTQIDHYVGIARDQTKSIVEKIQAKLPGIAKKKAE). Over 994–1032 (YEKYKTQIDHYVGIARDQTKSIVEKIQAKLPGIAKKKAE) the chain is Cytoplasmic. Residues 1000 to 1002 (QID) are interaction with BACE1.

As to quaternary structure, homodimer. Interacts with ATL1. Interacts with RTN4. Isoform 3 interacts with BACE1, BACE2, BCL2 and FADD. Interacts with ATL2. Interacts with TMEM33. Interacts with ZFYVE27 and with KIF5A in a ZFYVE27-dependent manner. Interacts with RIGI. Interacts with TRIM25. (Microbial infection) Interacts with Coxsackievirus A16, enterovirus 71 and poliovirus P2C proteins. In terms of assembly, (Microbial infection) Interacts with West Nile virus protein NS4A. Isoform 3 is widely expressed, with highest levels in brain, where it is enriched in neuronal cell bodies from gray matter (at protein level). Three times more abundant in macula than in peripheral retina. Isoform 1 is expressed at high levels in brain and at low levels in skeletal muscle. Isoform 2 is only found in melanoma.

The protein resides in the endoplasmic reticulum membrane. Its subcellular location is the golgi apparatus membrane. Its function is as follows. May be involved in membrane trafficking in the early secretory pathway. Inhibits BACE1 activity and amyloid precursor protein processing. May induce caspase-8 cascade and apoptosis. May favor BCL2 translocation to the mitochondria upon endoplasmic reticulum stress. Induces the formation of endoplasmic reticulum tubules. Also acts as an inflammation-resolving regulator by interacting with both TRIM25 and RIGI, subsequently impairing RIGI 'Lys-63'-linked polyubiquitination leading to IRF3 and NF-kappa-B inhibition. (Microbial infection) Plays a positive role in viral replication and pathogenesis of enteroviruses. The sequence is that of Reticulon-3 (RTN3) from Homo sapiens (Human).